We begin with the raw amino-acid sequence, 241 residues long: MSGGSARSLGKGSAPPGPVPEGLIRVYSMRFCPFAQRTLLVLNAKGIRHQVININLKNKPEWFFQKNPSGLVPVLENSQGQLIYESAITCEYLDEAYPGKKLLPDDPYEKACQKMVFELSSKVPPLLIRFIRRENEADCSGLKEELRKEFSKLEEVLTKKKTTYFGGSSLSMIDYLIWPWFERLEALELNECIDHTPKLKLWMAAMMKDPAVSALHIEPRDLRAFNDLYLQNSPEACDYGL.

Residue serine 2 is modified to N-acetylserine. The GST N-terminal domain occupies 22–101 (GLIRVYSMRF…YLDEAYPGKK (80 aa)). Cysteine 32 acts as the Nucleophile in catalysis. An N6-acetyllysine modification is found at lysine 57. Glutathione is bound by residues lysine 59, valine 72, and 85-86 (ES). Residues 106-225 (DPYEKACQKM…HIEPRDLRAF (120 aa)) form the GST C-terminal domain. Residues lysine 143, lysine 148, and lysine 152 each carry the N6-acetyllysine modification.

In terms of assembly, homodimer. As to expression, most abundant in the liver and skeletal muscle; also expressed in heart, diaphragm, colon, thymus, kidney, lung, ovaries, spleen, intestine and pancreas.

The protein localises to the cytoplasm. It localises to the cytosol. The enzyme catalyses RX + glutathione = an S-substituted glutathione + a halide anion + H(+). It carries out the reaction L-dehydroascorbate + 2 glutathione = glutathione disulfide + L-ascorbate. The catalysed reaction is methylarsonate + 2 glutathione + H(+) = methylarsonous acid + glutathione disulfide + H2O. Exhibits glutathione-dependent thiol transferase and dehydroascorbate reductase activities. Has S-(phenacyl)glutathione reductase activity. Also has glutathione S-transferase activity. Participates in the biotransformation of inorganic arsenic and reduces monomethylarsonic acid (MMA) and dimethylarsonic acid. The sequence is that of Glutathione S-transferase omega-1 (GSTO1) from Sus scrofa (Pig).